A 138-amino-acid polypeptide reads, in one-letter code: UPF0355 protein SSP2326 (138 aa).

A disordered region spans residues 115-138; the sequence is NVAFETNQTKSNSHYSEETNGPKS. Over residues 118-138 the composition is skewed to polar residues; the sequence is FETNQTKSNSHYSEETNGPKS.

This sequence belongs to the UPF0355 family.

The polypeptide is UPF0355 protein SSP2326 (Staphylococcus saprophyticus subsp. saprophyticus (strain ATCC 15305 / DSM 20229 / NCIMB 8711 / NCTC 7292 / S-41)).